The chain runs to 373 residues: WAT1-related protein At4g30420 (373 aa).

10 helical membrane-spanning segments follow: residues 2-22, 29-49, 55-75, 94-114, 125-145, 173-193, 205-225, 244-264, 270-290, and 294-314; these read AMTM…ATLV, VFIL…LYLS, IAIS…SLIG, MGSA…FLAG, GLAK…MTLL, WLIG…WLIL, LSLS…VTFF, CLYA…WAIA, FSAL…ALFF, and IYTG…TVLW. EamA domains are found at residues 9 to 135 and 186 to 313; these read CYAG…TILC and CWSF…YTVL.

Belongs to the drug/metabolite transporter (DMT) superfamily. Plant drug/metabolite exporter (P-DME) (TC 2.A.7.4) family.

It is found in the membrane. In Arabidopsis thaliana (Mouse-ear cress), this protein is WAT1-related protein At4g30420.